Consider the following 503-residue polypeptide: Probable DNA ligase (503 aa).

Glutamate 210 provides a ligand contact to ATP. The N6-AMP-lysine intermediate role is filled by lysine 212. Residues arginine 217, arginine 232, glutamate 261, phenylalanine 296, arginine 367, and lysine 373 each contribute to the ATP site.

This sequence belongs to the ATP-dependent DNA ligase family. It depends on Mg(2+) as a cofactor.

It carries out the reaction ATP + (deoxyribonucleotide)n-3'-hydroxyl + 5'-phospho-(deoxyribonucleotide)m = (deoxyribonucleotide)n+m + AMP + diphosphate.. DNA ligase that seals nicks in double-stranded DNA during DNA replication, DNA recombination and DNA repair. The sequence is that of Probable DNA ligase from Rhodococcus opacus (strain B4).